The sequence spans 87 residues: Toxin ICK-41 (87 aa).

Positions 1–19 (MKPIVYMLLFCAFTVVILG) are cleaved as a signal peptide. 4 disulfides stabilise this stretch: C40-C54, C40-C77, C53-C66, and C80-C87.

The protein belongs to the neurotoxin 27 (Jztx-72) family. ICK-41 subfamily. As to expression, expressed by the venom gland.

The protein localises to the secreted. Probable neurotoxin with ion channel impairing activity. The polypeptide is Toxin ICK-41 (Trittame loki (Brush-footed trapdoor spider)).